The sequence spans 283 residues: NAD kinase (283 aa).

The active-site Proton acceptor is the Asp-65. Residues 65 to 66 (DG), 139 to 140 (ND), Arg-150, Arg-167, Asp-169, 180 to 185 (TGYSVS), and Gln-239 each bind NAD(+).

This sequence belongs to the NAD kinase family. The cofactor is a divalent metal cation.

Its subcellular location is the cytoplasm. It catalyses the reaction NAD(+) + ATP = ADP + NADP(+) + H(+). Its function is as follows. Involved in the regulation of the intracellular balance of NAD and NADP, and is a key enzyme in the biosynthesis of NADP. Catalyzes specifically the phosphorylation on 2'-hydroxyl of the adenosine moiety of NAD to yield NADP. The protein is NAD kinase of Nitratidesulfovibrio vulgaris (strain DSM 19637 / Miyazaki F) (Desulfovibrio vulgaris).